The primary structure comprises 929 residues: MKLRFIRSAGWLFLLFCLACNARADLPPLSSKPEQGRATPSGEGDDKPVVIDTERIRGHHEYESGTRSESELRSRSTISTDQIKKPNQKADPAAKDTPSAPQQNYTLSPAIKTDSRTGTSAQESEKAESMVLPGGVERLPGPAAEEGEPRLRTRTQSAPRTLSAQKRGEKPAKTPAPAEADQDRPGFAEGERIGGHREEAGDEKLRLAGETEPEAIEQKLAEAEAETDKQSPVFVVADRLQGHVEEEIEAIGKAELSAGPQFISAERMKYNQGTNDAEAQGNVRVEKEGDILEGSDLKFNLLSKTGQLSEPSYRLKDASSRGYAGMLLFEGENQYRLQKASYTTCPVGDDSWVLQVADLKLDNDKKVGTAKNVKLTFKDVPILYTPWMNFSYSGERKSGLLAPTYGTGSRTGLELAVPFYWNIAPNYDATFSARLMSKRGLAINNEFRFLGQNSSSNLLADIVPRDLDTQTTRWRTSFWHNHYLGAGFSARLDYNRVSDATYFRDFGNNLNLTSRTNLLQQGLLSYNRGLGDDGTFNVTSLVQSFQTIQDPLAAIVVPYKRLPQVGLNANKPDVFGTGVDVNLSGSWTNFSHPTLVNGSRTVLFPSMSYPLRNSFGFITPKVGMHYTRYSLGEGAGVSEENPTRTLPIFSLDSGLAFDRKMSLGGESFTQTLEPRVFYVYVPFRAQDQLPNFDSAKTDFSFAQMLAENRFSGSDRINDANQVTFALTTRLLESSTGRERLRLAVGHQLSFIDRRITLETPQTIDRRPDFIAAVSGFLTPTISTDTSFQFDQTRLLADVVRSGVSYRPEPGRVLNFGYRFTRDVLHQVDASSQWRWSERWQTVARLNYSLQDKRILEGLAGVEYNACCWSLRFVLQHLTLATQKSTTAAFLQLELNGLMQIGSNPLTVLQRSIPGYIRTGSQGSGLIEGP.

An N-terminal signal peptide occupies residues 1-24; sequence MKLRFIRSAGWLFLLFCLACNARA. Positions 26-208 are disordered; the sequence is LPPLSSKPEQ…EAGDEKLRLA (183 aa). Residues 44-74 are compositionally biased toward basic and acidic residues; it reads GDDKPVVIDTERIRGHHEYESGTRSESELRS. The segment covering 154–164 has biased composition (polar residues); the sequence is RTQSAPRTLSA. A compositionally biased stretch (basic and acidic residues) spans 181-208; the sequence is DQDRPGFAEGERIGGHREEAGDEKLRLA.

This sequence belongs to the LptD family. Component of the lipopolysaccharide transport and assembly complex. Interacts with LptE and LptA.

The protein localises to the cell outer membrane. Functionally, together with LptE, is involved in the assembly of lipopolysaccharide (LPS) at the surface of the outer membrane. This chain is LPS-assembly protein LptD, found in Nitrosospira multiformis (strain ATCC 25196 / NCIMB 11849 / C 71).